Here is a 433-residue protein sequence, read N- to C-terminus: MLRWNEESSQAQAAALTRPAVSASAKVEAICKTILAKVKEQGDDALLDMAKEFDNRANPRLRVPLDEINASEQALSAELKYAIDTAYANVKCFHEAQLPKDIKLSTQPGVVCELKYQAIEAVGIYVPGGSAPLPSSVIMQGVLAQLSGAKTVVLATPVQGDKAINPAILYAAKLCGITTLIESGGAGAIAAMAYGTESVPKVNKIFGPGNSFVTMAKQLVAQTVPGMAIDMPAGPSEVLVIADERANPEFIAADLLSQAEHGADSQVILLCNSESIIEQTQQALTRQLAKLSRKETAEQALANSSLILVDSIAQAFDVSAQYGPEHLILQLADSTPYLDKVKNAGSVFVGDYTPESAGDYASGTNHVLPTYGYSASYSSLNLLDFFRTYTVQTITKSGLTQLSKAILPLANAEGLDAHANAVSIRLEAIKNEQ.

Serine 236, glutamine 258, and histidine 261 together coordinate substrate. Glutamine 258 and histidine 261 together coordinate Zn(2+). Active-site proton acceptor residues include glutamate 325 and histidine 326. Histidine 326, aspartate 359, glutamate 413, and histidine 418 together coordinate substrate. Position 359 (aspartate 359) interacts with Zn(2+). Histidine 418 contributes to the Zn(2+) binding site.

It belongs to the histidinol dehydrogenase family. Zn(2+) serves as cofactor.

The enzyme catalyses L-histidinol + 2 NAD(+) + H2O = L-histidine + 2 NADH + 3 H(+). Its pathway is amino-acid biosynthesis; L-histidine biosynthesis; L-histidine from 5-phospho-alpha-D-ribose 1-diphosphate: step 9/9. In terms of biological role, catalyzes the sequential NAD-dependent oxidations of L-histidinol to L-histidinaldehyde and then to L-histidine. This chain is Histidinol dehydrogenase, found in Pseudoalteromonas translucida (strain TAC 125).